A 457-amino-acid polypeptide reads, in one-letter code: Phosphoglucosamine mutase (457 aa).

Ser105 (phosphoserine intermediate) is an active-site residue. Mg(2+) is bound by residues Ser105, Asp247, Asp249, and Asp251. Ser105 is subject to Phosphoserine.

Belongs to the phosphohexose mutase family. Mg(2+) is required as a cofactor. In terms of processing, activated by phosphorylation.

The catalysed reaction is alpha-D-glucosamine 1-phosphate = D-glucosamine 6-phosphate. Catalyzes the conversion of glucosamine-6-phosphate to glucosamine-1-phosphate. In Protochlamydia amoebophila (strain UWE25), this protein is Phosphoglucosamine mutase.